Here is a 20-residue protein sequence, read N- to C-terminus: Flagellar filament 33 kDa core protein (20 aa).

It belongs to the bacterial flagellin family. The flagellum consists of an outer layer composed of repeating units of FlaA around a core that contains one or all of five antigenically related polypeptides.

It is found in the periplasmic flagellum. The protein resides in the periplasm. In terms of biological role, component of the core of the flagella. The protein is Flagellar filament 33 kDa core protein of Spirochaeta aurantia.